A 214-amino-acid polypeptide reads, in one-letter code: Eukaryotic translation initiation factor 4E-1B (214 aa).

MRNA contacts are provided by residues 53-54 (WQ), 99-100 (WE), 154-159 (RAKGDK), and 202-204 (TKS).

Ovary, muscle and testis.

It localises to the cytoplasm. The protein resides in the nucleus. Does not appear to be a mRNA-cap-binding protein. The chain is Eukaryotic translation initiation factor 4E-1B from Danio rerio (Zebrafish).